The chain runs to 401 residues: MEKSPDLVLIQATSIRSSNLPLFLIHGDDGDISKYFLLDPLDRNVYGIRNRCCDSAKAWPGGIPEMAKAYLDLIRAVKPRGEILLGGWSLGGLISLEIALVIARNQFSPLNVEGIIMIHTIFPSHQLRIEQVSKRPDSNADSHNGVGPCMIHNQRMIATWRPSPWPIRHIYTGLSDFESESPIVPQEPERISEIRYRQPPPPTILLRARHPASLVARCNNAGYCADTHCHRPMLGWESYREDFIVSIIDIEGNCFSIFDNNYVEGYISTDTLLDLHPICNRIAVVQFDAPVRLYLGLLVITLIDNKNNVMLFHYFTVRVNSDICIISIDLNLPSTGPISQTVNSKLAALASTTQGLNVPVLDLIFPTAAYTQLMSDTGAREMDQRKRQKDFTHTTIHDKNS.

Residues 379-401 (AREMDQRKRQKDFTHTTIHDKNS) are disordered.

The protein belongs to the AMT4 thioesterase family.

Its pathway is mycotoxin biosynthesis. In terms of biological role, probable thioesterase; part of the gene cluster that mediates the biosynthesis of gramillins A and B, bicyclic lipopeptides that induce cell death in maize leaves but not in wheat leaves. The nonribosomal peptide synthetase GRA1 incorporates respectively a glutamic adic (Glu), a leucine (Leu), a serine (Ser), a hydroxyglutamine (HOGln), a 2-amino decanoic acid, and 2 cysteins (CysB and CysA). The biosynthesis of 2-amino decanoic acid incorporated in gramillins could be initiated by a fatty acid synthase composed of the alpha and beta subunits FGSG_00036 and FGSG_11656. The cytochrome P450 monooxygenase FGSG_15680 could hydroxylate the fatty acid chain. Subsequent oxidation to the ketone by the oxidoreductase FGSG_00048 and transamination by aminotransferase FGSG_00049 could form 2-amino-decanoic acid. On the other hand, FGSG_15680 could also be responsible for the HO-modified glutamine at the gamma-position. Whether hydroxylation occurs on the fully assembled product or on the Gln residue prior to assembly into the gramillins requires further proof. The thioredoxin FGSG_00043 could also be required for the disulfide-bond formation between CysA and CysB. The specific involvement of the remaining proteins from the cluster is more difficult to discern, but could have broader regulatory (FGSG_00040 and FGSG_11657) or enzymatic functions (FGSG_00044 and FGSG_00045). The final C-domain of GRA1 does not possess the expected sequence of a termination CT domain, often implicated in macrocyclization and release of a cyclopeptidein fungal NRPs; and the thioesterase FGSG_00047 may act in concert with the terminal C-domain of GRA1 to catalyze the formation of the macrocyclic anhydride and release of the products. This is Probable thioesterase FGSG_00047 from Gibberella zeae (strain ATCC MYA-4620 / CBS 123657 / FGSC 9075 / NRRL 31084 / PH-1) (Wheat head blight fungus).